Consider the following 156-residue polypeptide: Large ribosomal subunit protein eL24 (156 aa).

Residues 110–129 (KESKAKKQETQAAKKAEKAK) are compositionally biased toward basic and acidic residues. The interval 110–156 (KESKAKKQETQAAKKAEKAKNAANPKARVTSKQGAKGAPVKVAAKSR) is disordered. The segment covering 130–156 (NAANPKARVTSKQGAKGAPVKVAAKSR) has biased composition (low complexity).

The protein belongs to the eukaryotic ribosomal protein eL24 family. As to quaternary structure, component of the large ribosomal subunit (LSU). Mature N.crassa ribosomes consist of a small (40S) and a large (60S) subunit. The 40S small subunit contains 1 molecule of ribosomal RNA (18S rRNA) and at least 32 different proteins. The large 60S subunit contains 3 rRNA molecules (26S, 5.8S and 5S rRNA) and at least 42 different proteins.

The protein resides in the cytoplasm. Its function is as follows. Component of the ribosome, a large ribonucleoprotein complex responsible for the synthesis of proteins in the cell. The small ribosomal subunit (SSU) binds messenger RNAs (mRNAs) and translates the encoded message by selecting cognate aminoacyl-transfer RNA (tRNA) molecules. The large subunit (LSU) contains the ribosomal catalytic site termed the peptidyl transferase center (PTC), which catalyzes the formation of peptide bonds, thereby polymerizing the amino acids delivered by tRNAs into a polypeptide chain. The nascent polypeptides leave the ribosome through a tunnel in the LSU and interact with protein factors that function in enzymatic processing, targeting, and the membrane insertion of nascent chains at the exit of the ribosomal tunnel. This is Large ribosomal subunit protein eL24 (rpl-24) from Neurospora crassa (strain ATCC 24698 / 74-OR23-1A / CBS 708.71 / DSM 1257 / FGSC 987).